A 223-amino-acid chain; its full sequence is Deoxyribose-phosphate aldolase (223 aa).

The active-site Proton donor/acceptor is the D92. K154 (schiff-base intermediate with acetaldehyde) is an active-site residue. K182 acts as the Proton donor/acceptor in catalysis.

It belongs to the DeoC/FbaB aldolase family. DeoC type 1 subfamily.

Its subcellular location is the cytoplasm. It catalyses the reaction 2-deoxy-D-ribose 5-phosphate = D-glyceraldehyde 3-phosphate + acetaldehyde. The protein operates within carbohydrate degradation; 2-deoxy-D-ribose 1-phosphate degradation; D-glyceraldehyde 3-phosphate and acetaldehyde from 2-deoxy-alpha-D-ribose 1-phosphate: step 2/2. Its function is as follows. Catalyzes a reversible aldol reaction between acetaldehyde and D-glyceraldehyde 3-phosphate to generate 2-deoxy-D-ribose 5-phosphate. The sequence is that of Deoxyribose-phosphate aldolase from Pasteurella multocida (strain Pm70).